The sequence spans 339 residues: UDP-N-acetylglucosamine--N-acetylmuramyl-(pentapeptide) pyrophosphoryl-undecaprenol N-acetylglucosamine transferase (339 aa).

UDP-N-acetyl-alpha-D-glucosamine is bound by residues 11–13 (TGG), Asn127, Arg170, Ser188, Ile235, and Gln280.

This sequence belongs to the glycosyltransferase 28 family. MurG subfamily.

It localises to the cell inner membrane. It carries out the reaction di-trans,octa-cis-undecaprenyl diphospho-N-acetyl-alpha-D-muramoyl-L-alanyl-D-glutamyl-meso-2,6-diaminopimeloyl-D-alanyl-D-alanine + UDP-N-acetyl-alpha-D-glucosamine = di-trans,octa-cis-undecaprenyl diphospho-[N-acetyl-alpha-D-glucosaminyl-(1-&gt;4)]-N-acetyl-alpha-D-muramoyl-L-alanyl-D-glutamyl-meso-2,6-diaminopimeloyl-D-alanyl-D-alanine + UDP + H(+). It functions in the pathway cell wall biogenesis; peptidoglycan biosynthesis. In terms of biological role, cell wall formation. Catalyzes the transfer of a GlcNAc subunit on undecaprenyl-pyrophosphoryl-MurNAc-pentapeptide (lipid intermediate I) to form undecaprenyl-pyrophosphoryl-MurNAc-(pentapeptide)GlcNAc (lipid intermediate II). The sequence is that of UDP-N-acetylglucosamine--N-acetylmuramyl-(pentapeptide) pyrophosphoryl-undecaprenol N-acetylglucosamine transferase from Thermotoga sp. (strain RQ2).